Consider the following 365-residue polypeptide: tRNA/tmRNA (uracil-C(5))-methyltransferase (365 aa).

Q189, Y217, N222, E238, and D298 together coordinate S-adenosyl-L-methionine. C323 serves as the catalytic Nucleophile. Catalysis depends on E357, which acts as the Proton acceptor.

The protein belongs to the class I-like SAM-binding methyltransferase superfamily. RNA M5U methyltransferase family. TrmA subfamily.

The enzyme catalyses uridine(54) in tRNA + S-adenosyl-L-methionine = 5-methyluridine(54) in tRNA + S-adenosyl-L-homocysteine + H(+). It catalyses the reaction uridine(341) in tmRNA + S-adenosyl-L-methionine = 5-methyluridine(341) in tmRNA + S-adenosyl-L-homocysteine + H(+). Its function is as follows. Dual-specificity methyltransferase that catalyzes the formation of 5-methyluridine at position 54 (m5U54) in all tRNAs, and that of position 341 (m5U341) in tmRNA (transfer-mRNA). In Shewanella pealeana (strain ATCC 700345 / ANG-SQ1), this protein is tRNA/tmRNA (uracil-C(5))-methyltransferase.